Consider the following 82-residue polypeptide: Beta-defensin 119 (82 aa).

The N-terminal stretch at 1 to 19 (MKFFLFFVILLAMEPVISG) is a signal peptide. Disulfide bonds link cysteine 26-cysteine 53, cysteine 33-cysteine 47, and cysteine 37-cysteine 54.

The protein belongs to the beta-defensin family.

The protein resides in the secreted. In terms of biological role, has antibacterial activity. The sequence is that of Beta-defensin 119 (DEFB119) from Canis lupus familiaris (Dog).